We begin with the raw amino-acid sequence, 492 residues long: MAAKLRAHQVDVDPDFAPQSRPRSCTWPLPQPDLAGDEDGALGAGVAEGAEDCGPERRATAPAMAPAPPLGAEVGPLRKAKSSRRNAWGNLSYADLITKAIESAPDKRLTLSQIYDWMVRYVPYFKDKGDSNSSAGWKNSIRHNLSLHTRFIRVQNEGTGKSSWWMLNPEGGKTGKTPRRRAVSMDNGAKFLRIKGKASKKKQLQAPERSPDDSSPSAPAPGPVPAAAKWAASPASHASDDYEAWADFRGGGRPLLGEAAELEDDEALEALAPSSPLMYPSPASALSPALGSRCPGELPRLAELGGPLGLHGGGGAGLPEGLLDGAQDAYGPRPAPRPGPVLGAPGELALAGAAAAYPGKGAAPYAPPAPSRSALAHPISLMTLPGEAGAAGLAPPGHAAAFGGPPGGLLLDALPGPYAAAAAGPLGAAPDRFPADLDLDMFSGSLECDVESIILNDFMDSDEMDFNFDSALPPPPPGLAGAPPPNQSWVPG.

4 disordered regions span residues 1-76 (MAAK…EVGP), 163-235 (SWWM…ASPA), 315-338 (GAGLPEGLLDGAQDAYGPRPAPRP), and 466-492 (FNFDSALPPPPPGLAGAPPPNQSWVPG). Positions 88-182 (WGNLSYADLI…KTGKTPRRRA (95 aa)) form a DNA-binding region, fork-head. Ser-184 bears the Phosphoserine mark. Over residues 192 to 203 (LRIKGKASKKKQ) the composition is skewed to basic residues. Positions 225 to 235 (PAAAKWAASPA) are enriched in low complexity. The segment covering 472–486 (LPPPPPGLAGAPPPN) has biased composition (pro residues).

Post-translationally, phosphorylation of Ser-184 is be important in regulating the transacriptional activity.

The protein resides in the cytoplasm. Its subcellular location is the nucleus. Functionally, transcriptional activator. The sequence is that of Forkhead box protein O6 (FOXO6) from Homo sapiens (Human).